Here is a 204-residue protein sequence, read N- to C-terminus: 3-isopropylmalate dehydratase small subunit (204 aa).

This sequence belongs to the LeuD family. LeuD type 1 subfamily. In terms of assembly, heterodimer of LeuC and LeuD.

The enzyme catalyses (2R,3S)-3-isopropylmalate = (2S)-2-isopropylmalate. Its pathway is amino-acid biosynthesis; L-leucine biosynthesis; L-leucine from 3-methyl-2-oxobutanoate: step 2/4. Functionally, catalyzes the isomerization between 2-isopropylmalate and 3-isopropylmalate, via the formation of 2-isopropylmaleate. In Psychromonas ingrahamii (strain DSM 17664 / CCUG 51855 / 37), this protein is 3-isopropylmalate dehydratase small subunit.